A 284-amino-acid chain; its full sequence is Ribosomal RNA small subunit methyltransferase A (284 aa).

Asparagine 12, leucine 14, glycine 38, glutamate 59, aspartate 81, and asparagine 106 together coordinate S-adenosyl-L-methionine.

The protein belongs to the class I-like SAM-binding methyltransferase superfamily. rRNA adenine N(6)-methyltransferase family. RsmA subfamily.

The protein resides in the cytoplasm. The catalysed reaction is adenosine(1518)/adenosine(1519) in 16S rRNA + 4 S-adenosyl-L-methionine = N(6)-dimethyladenosine(1518)/N(6)-dimethyladenosine(1519) in 16S rRNA + 4 S-adenosyl-L-homocysteine + 4 H(+). Specifically dimethylates two adjacent adenosines (A1518 and A1519) in the loop of a conserved hairpin near the 3'-end of 16S rRNA in the 30S particle. May play a critical role in biogenesis of 30S subunits. In Phytoplasma australiense, this protein is Ribosomal RNA small subunit methyltransferase A.